Consider the following 446-residue polypeptide: Chromosomal replication initiator protein DnaA (446 aa).

The tract at residues 1–81 (MENISDLWNS…AKLAIRFIIP (81 aa)) is domain I, interacts with DnaA modulators. The domain II stretch occupies residues 81 to 109 (PQSQAEEDIDLPSVKQKHAHDESNHLPQS). The tract at residues 110–326 (MLNPKYTFDT…GALIRVVAYS (217 aa)) is domain III, AAA+ region. Residues G154, G156, K157, and T158 each contribute to the ATP site. The segment at 327-446 (SLINKDMNAD…HVEEVKDILK (120 aa)) is domain IV, binds dsDNA.

The protein belongs to the DnaA family. In terms of assembly, oligomerizes as a right-handed, spiral filament on DNA at oriC.

It is found in the cytoplasm. Its function is as follows. Plays an essential role in the initiation and regulation of chromosomal replication. ATP-DnaA binds to the origin of replication (oriC) to initiate formation of the DNA replication initiation complex once per cell cycle. Binds the DnaA box (a 9 base pair repeat at the origin) and separates the double-stranded (ds)DNA. Forms a right-handed helical filament on oriC DNA; dsDNA binds to the exterior of the filament while single-stranded (ss)DNA is stabiized in the filament's interior. The ATP-DnaA-oriC complex binds and stabilizes one strand of the AT-rich DNA unwinding element (DUE), permitting loading of DNA polymerase. After initiation quickly degrades to an ADP-DnaA complex that is not apt for DNA replication. Binds acidic phospholipids. The sequence is that of Chromosomal replication initiator protein DnaA from Bacillus mycoides (strain KBAB4) (Bacillus weihenstephanensis).